The sequence spans 1009 residues: Protein WBSCR14 homolog (1009 aa).

Disordered stretches follow at residues 1–20 (MSRG…PHDD), 304–354 (MSLG…LHQM), 488–531 (NNQP…DPMM), and 686–728 (ILES…EQEA). 2 stretches are compositionally biased toward polar residues: residues 324–350 (RTPT…SSAS) and 499–508 (RSNLLPTQND). Residues 511–526 (LPQFLQSTQPTPQPQS) show a composition bias toward low complexity. Residues 686-695 (ILESPSTSGD) show a composition bias toward polar residues. One can recognise a bHLH domain in the interval 803–856 (RKRILHLHAEQNRRSALKDGFDQLMDIIPDLYSGGVKPTNAVVLAKSADHIRRL). The segment at 856–877 (LQAEKWDKTQKIDEAKAKIEKL) is leucine-zipper.

Expressed in intestine, neurons, muscle, hypodermis, excretory cell and other tissues.

It is found in the nucleus. It localises to the cytoplasm. The protein resides in the mitochondrion. Transcription factor that binds to the E box motif 5'-CACGTG-3', probably in a heterodimeric complex with mxl-2. Involved in modulating longevity in response to TOR signaling, dietary restriction, the decline in protein homeostasis associated with normal aging, germline signaling and the insulin-like signaling pathway. Plays a role in autophagy. Involved in regulating migration of the ray 1 precursor cells in the male tail, acting in concert with Wnt and semaphorin signaling pathways. Regulates transcription of genes encoding extracellular matrix (ECM) components which may contribute to the substratum required for migration of the neighboring ray 1 precursor cells. Involved in repressing infection by the microsporidian pathogen N.parisii, probably acting independently of its canonical partner, mxl-2. The protein is Protein WBSCR14 homolog (mml-1) of Caenorhabditis elegans.